Reading from the N-terminus, the 261-residue chain is Cytochrome c oxidase subunit 3 (261 aa).

The Mitochondrial matrix segment spans residues M1–P15. The chain crosses the membrane as a helical span at residues W16–W34. Over F35–L40 the chain is Mitochondrial intermembrane. A helical membrane pass occupies residues I41 to T66. Topologically, residues F67–T72 are mitochondrial matrix. A helical membrane pass occupies residues P73–S105. The Mitochondrial intermembrane portion of the chain corresponds to L106–E128. A helical membrane pass occupies residues V129–M152. Topologically, residues E153–N155 are mitochondrial matrix. Residues R156 to E183 form a helical membrane-spanning segment. The Mitochondrial intermembrane segment spans residues A184–D190. The chain crosses the membrane as a helical span at residues G191 to L223. The Mitochondrial matrix segment spans residues K224–H232. The helical transmembrane segment at F233–I256 threads the bilayer. The Mitochondrial intermembrane segment spans residues Y257 to S261.

The protein belongs to the cytochrome c oxidase subunit 3 family. Component of the cytochrome c oxidase (complex IV, CIV), a multisubunit enzyme composed of 14 subunits. The complex is composed of a catalytic core of 3 subunits MT-CO1, MT-CO2 and MT-CO3, encoded in the mitochondrial DNA, and 11 supernumerary subunits COX4I, COX5A, COX5B, COX6A, COX6B, COX6C, COX7A, COX7B, COX7C, COX8 and NDUFA4, which are encoded in the nuclear genome. The complex exists as a monomer or a dimer and forms supercomplexes (SCs) in the inner mitochondrial membrane with NADH-ubiquinone oxidoreductase (complex I, CI) and ubiquinol-cytochrome c oxidoreductase (cytochrome b-c1 complex, complex III, CIII), resulting in different assemblies (supercomplex SCI(1)III(2)IV(1) and megacomplex MCI(2)III(2)IV(2)).

The protein resides in the mitochondrion inner membrane. The enzyme catalyses 4 Fe(II)-[cytochrome c] + O2 + 8 H(+)(in) = 4 Fe(III)-[cytochrome c] + 2 H2O + 4 H(+)(out). Component of the cytochrome c oxidase, the last enzyme in the mitochondrial electron transport chain which drives oxidative phosphorylation. The respiratory chain contains 3 multisubunit complexes succinate dehydrogenase (complex II, CII), ubiquinol-cytochrome c oxidoreductase (cytochrome b-c1 complex, complex III, CIII) and cytochrome c oxidase (complex IV, CIV), that cooperate to transfer electrons derived from NADH and succinate to molecular oxygen, creating an electrochemical gradient over the inner membrane that drives transmembrane transport and the ATP synthase. Cytochrome c oxidase is the component of the respiratory chain that catalyzes the reduction of oxygen to water. Electrons originating from reduced cytochrome c in the intermembrane space (IMS) are transferred via the dinuclear copper A center (CU(A)) of subunit 2 and heme A of subunit 1 to the active site in subunit 1, a binuclear center (BNC) formed by heme A3 and copper B (CU(B)). The BNC reduces molecular oxygen to 2 water molecules using 4 electrons from cytochrome c in the IMS and 4 protons from the mitochondrial matrix. The protein is Cytochrome c oxidase subunit 3 (MT-CO3) of Hippopotamus amphibius (Hippopotamus).